The chain runs to 488 residues: 1-deoxy-D-xylulose 5-phosphate reductoisomerase, apicoplastic (488 aa).

Residues 1 to 72 constitute an apicoplast transit peptide; sequence MKKYIYIYFF…LCKKDLIDIG (72 aa). Residues 86-89 and 115-117 each bind NADP(+); these read TGSI and NKS. Lysine 205 contacts 1-deoxy-D-xylulose 5-phosphate. NADP(+) is bound at residue glutamate 206. Aspartate 231 provides a ligand contact to Mn(2+). The 1-deoxy-D-xylulose 5-phosphate site is built by serine 232, glutamate 233, serine 270, and histidine 293. Glutamate 233 serves as a coordination point for Mn(2+). Glycine 299 is a binding site for NADP(+). Serine 306, asparagine 311, lysine 312, and glutamate 315 together coordinate 1-deoxy-D-xylulose 5-phosphate. Glutamate 315 contacts Mn(2+).

It belongs to the DXR family. As to quaternary structure, homodimer. Requires Mg(2+) as cofactor. Mn(2+) is required as a cofactor.

The protein resides in the plastid. It is found in the apicoplast. It catalyses the reaction 2-C-methyl-D-erythritol 4-phosphate + NADP(+) = 1-deoxy-D-xylulose 5-phosphate + NADPH + H(+). It participates in isoprenoid biosynthesis; isopentenyl diphosphate biosynthesis via DXP pathway; isopentenyl diphosphate from 1-deoxy-D-xylulose 5-phosphate: step 1/6. With respect to regulation, inhibited by fosmidomycin and its derivatives. Functionally, catalyzes the NADPH-dependent rearrangement and reduction of 1-deoxy-D-xylulose-5-phosphate (DXP) to 2-C-methyl-D-erythritol 4-phosphate (MEP). The protein is 1-deoxy-D-xylulose 5-phosphate reductoisomerase, apicoplastic (DXR) of Plasmodium falciparum (isolate 3D7).